Consider the following 513-residue polypeptide: MTALTLSTAAASGLRADAIVVGVAKSPKGDKGLVVAPGAEAVDKGYDGKLAAVLETLGASGAEGEVTKLPAPSGFKAPVVVAVGLGAAPEDGQDKGTAFDAEALRRAAGAAARALAGAKKAAFALPVADAADAGTIGEGALLGAYSFDAYKENGRNAKNGKAPLAEVVLLGGKPRDKAFKAAVERAVAVTEELNRARDLINTPPNDLNPESFAAVAQAAAKEHGIKVQVLDEKALTKGGYGGILGVGAGSAAGPRLVKLSYTSSKAKKHLAFVGKGITYDSGGISLKPAGHNETMKCDMSGAAAVFAAVVAAARLGLEVNVTGWLALAENMPSGTATRPGDVLRMYSGKTVEVLNTDAEGRLVLADALWAASEEKPDAIVDVATLTGAMMLALGNRLFGVMANDDAFRTAVVEAAEEVGEDSWPMPLPEHLRKGMDSPTADIANMGERMGGGLVAGLFLREFVGEGITWAHLDIAGPAFNEAAPFGYTPKGGTGTAVRTLVRLAELTAAGDLG.

Residues K275 and D280 each coordinate Mn(2+). K287 is an active-site residue. The Mn(2+) site is built by D298, D357, and E359. R361 is a catalytic residue.

The protein belongs to the peptidase M17 family. Requires Mn(2+) as cofactor.

The protein localises to the cytoplasm. It carries out the reaction Release of an N-terminal amino acid, Xaa-|-Yaa-, in which Xaa is preferably Leu, but may be other amino acids including Pro although not Arg or Lys, and Yaa may be Pro. Amino acid amides and methyl esters are also readily hydrolyzed, but rates on arylamides are exceedingly low.. It catalyses the reaction Release of an N-terminal amino acid, preferentially leucine, but not glutamic or aspartic acids.. Its function is as follows. Presumably involved in the processing and regular turnover of intracellular proteins. Catalyzes the removal of unsubstituted N-terminal amino acids from various peptides. The sequence is that of Probable cytosol aminopeptidase from Streptomyces avermitilis (strain ATCC 31267 / DSM 46492 / JCM 5070 / NBRC 14893 / NCIMB 12804 / NRRL 8165 / MA-4680).